We begin with the raw amino-acid sequence, 227 residues long: Class I hydrophobin 4 (227 aa).

A signal peptide spans 1-18; sequence MQFTTFALLAVAAATASA. Disulfide bonds link cysteine 159/cysteine 207, cysteine 167/cysteine 200, cysteine 168/cysteine 186, and cysteine 208/cysteine 222. Residues asparagine 190 and asparagine 219 are each glycosylated (N-linked (GlcNAc...) asparagine).

This sequence belongs to the fungal hydrophobin family. As to quaternary structure, self-assembles to form functional amyloid fibrils called rodlets. Self-assembly into fibrillar rodlets occurs spontaneously at hydrophobic:hydrophilic interfaces and the rodlets further associate laterally to form amphipathic monolayers. Expressed in conidia and aerial hyphae.

It localises to the secreted. The protein resides in the cell wall. Functionally, aerial growth, conidiation, and dispersal of filamentous fungi in the environment rely upon a capability of their secreting small amphipathic proteins called hydrophobins (HPBs) with low sequence identity. Class I can self-assemble into an outermost layer of rodlet bundles on aerial cell surfaces, conferring cellular hydrophobicity that supports fungal growth, development and dispersal; whereas Class II form highly ordered films at water-air interfaces through intermolecular interactions but contribute nothing to the rodlet structure. Hcf-4 is a class I hydrophobin that is involved in the development and germination of conidia. The chain is Class I hydrophobin 4 from Passalora fulva (Tomato leaf mold).